We begin with the raw amino-acid sequence, 756 residues long: Rab11 family-interacting protein 3 (756 aa).

Residues 1 to 24 are compositionally biased toward pro residues; that stretch reads MASAPPASPPGSEPPGPDPEPGGP. The interval 1–204 is disordered; the sequence is MASAPPASPP…SEPVGSQEDG (204 aa). Positions 2 to 435 are important for binding to DYNC1LI1; the sequence is ASAPPASPPG…RLSSKKVARY (434 aa). The segment covering 27 to 39 has biased composition (low complexity); it reads PGAAQLAPGPAEL. S52 is subject to Phosphoserine. Over residues 53–68 the composition is skewed to low complexity; it reads PGLDEPAPGAAADGGA. Pro residues predominate over residues 84 to 94; the sequence is DPGPSAPPPRS. The residue at position 102 (S102) is a Phosphoserine; by CDK1. 2 EF-hand domains span residues 202–237 and 234–269; these read EDGPRLRAVFDALDGDGDGFVRIEDFIQFATVYGAE and YGAEQVKDLTKYLDPSGLGVISFEDFYQGITAIRNG. Residues D215, D217, D219, D226, D247, S249, and D258 each coordinate Ca(2+). Residues S281, S348, S488, S538, S647, and S648 each carry the phosphoserine modification. The ARF-binding domain (ABD) stretch occupies residues 484-588; it reads GEQHSRLRQE…LLDEIESLTL (105 aa). Residues 485–694 adopt a coiled-coil conformation; it reads EQHSRLRQEN…NGQIITLSIQ (210 aa). A disordered region spans residues 645–664; that stretch reads RSSSMGLQEYHSRARESELE. A compositionally biased stretch (basic and acidic residues) spans 654–664; it reads YHSRARESELE. The region spanning 694–756 is the FIP-RBD domain; that stretch reads QGAKSLFSTA…ETNPSILEVK (63 aa).

As to quaternary structure, homodimer. Interacts with RAB11A; the interaction is direct and is required for the recruitment to endosomes. Interacts with RAB11B. Forms a ternary complex with RAB11A and dynein intermediate chain DYNC1LI1; RAB11FIP3 links RAB11A to dynein and the interaction regulates endocytic trafficking. Interacts with dynein intermediate chain and dynactin (DCTN1); the interaction activates dynein processivity. Interacts with ARF6 and EXOC7; the interaction serves for recruitment and tethering of recycling endosomes-derived vesicles to the cleavage furrow/midbody. Interacts with RACGAP1/MgcRacGAP; the interaction occurs at late telophase and is required for recruitment and tethering of recycling endosomes-derived vesicles to the cleavage furrow/midbody. Forms a complex with RAB11A and Rabin8/RAB3IP, probably a heterohexamer with two of each protein subunit, where RAB3IP and RAB11FIP3 simultaneously bind to RAB11A; the complex promotes preciliary trafficking. Forms a complex containing RAB11A, ASAP1, RAB3IP, RAP11FIP3 and ARF4; the complex promotes preciliary trafficking; the complex binds to RHO in photoreceptor cells and promotes RHO ciliary transport. Interacts with RAB11FIP4. Interacts with RAB25. In terms of processing, phosphorylated at Ser-102 by CDK1 during metaphase, and dephosphorylated as cells enter telophase.

Its subcellular location is the endosome membrane. It localises to the recycling endosome membrane. It is found in the cytoplasm. The protein resides in the cytoskeleton. The protein localises to the microtubule organizing center. Its subcellular location is the centrosome. It localises to the cleavage furrow. It is found in the midbody. The protein resides in the golgi apparatus membrane. The protein localises to the golgi apparatus. Its subcellular location is the trans-Golgi network membrane. Its function is as follows. Downstream effector molecule for Rab11 GTPase which is involved in endocytic trafficking, cytokinesis and intracellular ciliogenesis by participating in membrane delivery. Recruited by Rab11 to endosomes where it links Rab11 to dynein motor complex. The functional Rab11-RAB11FIP3-dynein complex regulates the movement of peripheral sorting endosomes (SE) along microtubule tracks toward the microtubule organizing center/centrosome, generating the endocytic recycling compartment (ERC) during interphase of cell cycle. Facilitates the interaction between dynein and dynactin and activates dynein processivity. Binding with ASAP1 is needed to regulate the pericentrosomal localization of recycling endosomes. The Rab11-RAB11FIP3 complex is also implicated in the transport during telophase of vesicles derived from recycling endosomes to the cleavage furrow via centrosome-anchored microtubules, where the vesicles function to deliver membrane during late cytokinesis and abscission. The recruitment of Rab11-RAB11FIP3-containing endosomes to the cleavage furrow and tethering to the midbody is co-mediated by RAB11FIP3 interaction with ARF6-exocyst and RACGAP1-MKLP1 tethering complexes. Also involved in the Rab11-Rabin8-Rab8 ciliogenesis cascade by facilitating the orderly assembly of a ciliary targeting complex containing Rab11, ASAP1, Rabin8/RAB3IP, RAB11FIP3 and ARF4, which directs preciliary vesicle trafficking to mother centriole and ciliogenesis initiation. Also promotes the activity of Rab11 and ASAP1 in the ARF4-dependent Golgi-to-cilia transport of the sensory receptor rhodopsin. Competes with WDR44 for binding to Rab11, which controls intracellular ciliogenesis pathway. May play a role in breast cancer cell motility by regulating actin cytoskeleton. The polypeptide is Rab11 family-interacting protein 3 (Homo sapiens (Human)).